The primary structure comprises 247 residues: Orotidine 5'-phosphate decarboxylase (247 aa).

Residues Asp22, Lys44, 71-80 (DLKFHDIPNT), Thr131, Arg192, Gln201, Gly221, and Arg222 each bind substrate. Lys73 (proton donor) is an active-site residue.

The protein belongs to the OMP decarboxylase family. Type 1 subfamily. Homodimer.

The enzyme catalyses orotidine 5'-phosphate + H(+) = UMP + CO2. It participates in pyrimidine metabolism; UMP biosynthesis via de novo pathway; UMP from orotate: step 2/2. In terms of biological role, catalyzes the decarboxylation of orotidine 5'-monophosphate (OMP) to uridine 5'-monophosphate (UMP). The polypeptide is Orotidine 5'-phosphate decarboxylase (Pectobacterium carotovorum subsp. carotovorum (strain PC1)).